A 453-amino-acid chain; its full sequence is 3-phosphoshikimate 1-carboxyvinyltransferase (453 aa).

The interval 1–25 is disordered; that stretch reads MSHDSEPQPVTAHPAGPLTGALKPP. 3-phosphoshikimate contacts are provided by Lys-28, Ser-29, and Arg-33. Lys-28 is a phosphoenolpyruvate binding site. Positions 101 and 129 each coordinate phosphoenolpyruvate. The 3-phosphoshikimate site is built by Ser-175, Gln-177, Asp-330, and Lys-357. A phosphoenolpyruvate-binding site is contributed by Gln-177. Asp-330 serves as the catalytic Proton acceptor. Residues Arg-361 and Arg-405 each coordinate phosphoenolpyruvate.

It belongs to the EPSP synthase family. As to quaternary structure, monomer.

Its subcellular location is the cytoplasm. It catalyses the reaction 3-phosphoshikimate + phosphoenolpyruvate = 5-O-(1-carboxyvinyl)-3-phosphoshikimate + phosphate. The protein operates within metabolic intermediate biosynthesis; chorismate biosynthesis; chorismate from D-erythrose 4-phosphate and phosphoenolpyruvate: step 6/7. In terms of biological role, catalyzes the transfer of the enolpyruvyl moiety of phosphoenolpyruvate (PEP) to the 5-hydroxyl of shikimate-3-phosphate (S3P) to produce enolpyruvyl shikimate-3-phosphate and inorganic phosphate. This is 3-phosphoshikimate 1-carboxyvinyltransferase from Methylorubrum populi (strain ATCC BAA-705 / NCIMB 13946 / BJ001) (Methylobacterium populi).